The primary structure comprises 554 residues: 4-coumarate--CoA ligase 3 (554 aa).

Residues S188, S189, G190, T191, T192, and K196 each coordinate ATP. Y238 and S242 together coordinate (E)-4-coumaroyl-AMP. K259 contacts CoA. The tract at residues 261–330 (DLGALVDLVR…AKIPNAVLGQ (70 aa)) is SBD1. Positions 308, 330, 331, 335, and 343 each coordinate (E)-4-coumaroyl-AMP. Residues Q330, G331, and T335 each contribute to the ATP site. Positions 331–398 (GYGMTEAGPV…IRGEQIMKGY (68 aa)) are SBD2. The ATP site is built by D419 and R434. Residues K436 and K440 each contribute to the (E)-4-coumaroyl-AMP site. Residues K442 and G443 each coordinate CoA. K525 lines the ATP pocket.

It belongs to the ATP-dependent AMP-binding enzyme family. Mg(2+) is required as a cofactor. In terms of tissue distribution, expressed in root exodermis and epidermis cells, stem vascular cells, leaf developing vascular bundle cells and parenchyma cells, lemma, palea, stamens and pistil.

The enzyme catalyses (E)-ferulate + ATP + CoA = (E)-feruloyl-CoA + AMP + diphosphate. It catalyses the reaction (E)-4-coumarate + ATP + CoA = (E)-4-coumaroyl-CoA + AMP + diphosphate. It carries out the reaction (E)-caffeate + ATP + CoA = (E)-caffeoyl-CoA + AMP + diphosphate. The catalysed reaction is (E)-cinnamate + ATP + CoA = (E)-cinnamoyl-CoA + AMP + diphosphate. The enzyme catalyses (E)-ferulate + ATP + H(+) = (E)-feruloyl-AMP + diphosphate. It catalyses the reaction (E)-feruloyl-AMP + CoA = (E)-feruloyl-CoA + AMP + H(+). It carries out the reaction (E)-4-coumarate + ATP + H(+) = (E)-4-coumaroyl-AMP + diphosphate. The catalysed reaction is (E)-4-coumaroyl-AMP + CoA = (E)-4-coumaroyl-CoA + AMP + H(+). The enzyme catalyses (E)-caffeate + ATP + H(+) = (E)-caffeoyl-AMP + diphosphate. It catalyses the reaction (E)-caffeoyl-AMP + CoA = (E)-caffeoyl-CoA + AMP + H(+). It functions in the pathway phytoalexin biosynthesis; 3,4',5-trihydroxystilbene biosynthesis; 3,4',5-trihydroxystilbene from trans-4-coumarate: step 1/2. Functionally, involved in the phenylpropanoid metabolism by mediating the activation of a number of hydroxycinnamates for the biosynthesis of monolignols and other phenolic secondary metabolites. Catalyzes the formation of CoA esters of cinnamate, 4-coumarate, caffeate and ferulate. Is more efficient with substrates in the following order: ferulate &gt; 4-coumarate &gt; caffeate &gt; cinnamate. Possesses very high activity compared to 4CL1, 4CL2, 4CL4 and 4CL5. Cannot convert sinapate to its corresponding CoA ester. May play a role in the synthesis of lignin as well as other phenolic compounds. Follows a two-step reaction mechanism, wherein the carboxylate substrate first undergoes adenylation by ATP, followed by a thioesterification in the presence of CoA to yield the final CoA thioester. In Oryza sativa subsp. japonica (Rice), this protein is 4-coumarate--CoA ligase 3.